A 372-amino-acid chain; its full sequence is Alpha-parvin (372 aa).

Residues 1–31 (MATSPQKSPLVPKSPTPKSPPSRKKDDSFLG) are disordered. Ala-2 bears the N-acetylalanine mark. Residues Ser-8, Ser-14, and Ser-19 each carry the phosphoserine modification. Residues 21-25 (PSRKK) are interaction with ARHGAP31. A phosphoserine mark is found at Ser-28 and Ser-62. Calponin-homology (CH) domains follow at residues 95-202 (QELM…QYFR) and 262-369 (NVVK…TKYR). A required for interaction with TESK1 and ILK region spans residues 223–372 (GILQSRQIQE…NLFTKYRNVE (150 aa)).

It belongs to the parvin family. In terms of assembly, component of the heterotrimeric IPP (ILK-PINCH-PARVIN) complex composed of ILK, LIMS1/PINCH and PARVA; the complex binds to F-actin via the C-terminal tail of LIMS1 and the N-terminal region of PARVA, promoting F-actin filament bundling. Interacts with TGFB1I1. Interacts with ARHGAP31. Interacts with the actin cytoskeleton. Interacts (via C-terminus) with TESK1 (via C-terminus); the interaction inhibits TESK1 kinase activity. Interacts with PXN/PAXILLIN (via LD motif 4).

It localises to the cell junction. The protein resides in the focal adhesion. It is found in the cell membrane. The protein localises to the cytoplasm. Its subcellular location is the cytoskeleton. It localises to the myofibril. The protein resides in the sarcomere. It is found in the z line. Functionally, plays a role in sarcomere organization and in smooth muscle cell contraction. Required for normal development of the embryonic cardiovascular system, and for normal septation of the heart outflow tract. Plays a role in sprouting angiogenesis and is required for normal adhesion of vascular smooth muscle cells to endothelial cells during blood vessel development. Plays a role in the reorganization of the actin cytoskeleton, formation of lamellipodia and ciliogenesis. Plays a role in the establishment of cell polarity, cell adhesion, cell spreading, and directed cell migration. Within the IPP (ILK-PINCH-PARVIN) complex, binds to F-actin, promoting F-actin bundling, a process required to generate force for actin cytoskeleton reorganization and subsequent dynamic cell adhesion events such as cell spreading and migration. The sequence is that of Alpha-parvin (Parva) from Mus musculus (Mouse).